Reading from the N-terminus, the 249-residue chain is Probable transcriptional regulatory protein IL1088 (249 aa).

This sequence belongs to the TACO1 family.

It localises to the cytoplasm. The sequence is that of Probable transcriptional regulatory protein IL1088 from Idiomarina loihiensis (strain ATCC BAA-735 / DSM 15497 / L2-TR).